The chain runs to 387 residues: S-adenosylmethionine synthase (387 aa).

His-16 serves as a coordination point for ATP. Residue Asp-18 participates in Mg(2+) binding. Position 44 (Glu-44) interacts with K(+). Glu-57 and Gln-100 together coordinate L-methionine. The interval Gln-100–Arg-110 is flexible loop. ATP contacts are provided by residues Asp-167–Lys-169, Arg-232–Phe-233, Asp-241, Arg-247–Lys-248, Ala-264, and Lys-268. Asp-241 is a binding site for L-methionine. Lys-272 serves as a coordination point for L-methionine.

It belongs to the AdoMet synthase family. In terms of assembly, homotetramer; dimer of dimers. It depends on Mg(2+) as a cofactor. The cofactor is K(+).

It localises to the cytoplasm. It catalyses the reaction L-methionine + ATP + H2O = S-adenosyl-L-methionine + phosphate + diphosphate. Its pathway is amino-acid biosynthesis; S-adenosyl-L-methionine biosynthesis; S-adenosyl-L-methionine from L-methionine: step 1/1. Its function is as follows. Catalyzes the formation of S-adenosylmethionine (AdoMet) from methionine and ATP. The overall synthetic reaction is composed of two sequential steps, AdoMet formation and the subsequent tripolyphosphate hydrolysis which occurs prior to release of AdoMet from the enzyme. The protein is S-adenosylmethionine synthase of Cupriavidus metallidurans (strain ATCC 43123 / DSM 2839 / NBRC 102507 / CH34) (Ralstonia metallidurans).